We begin with the raw amino-acid sequence, 133 residues long: MLYPICIEKVNDGYVVSVPDVPGCFSAGDTLSEAMLNAKEAISFHIEGMLEDDEELPKSNPIEQYINQPEYKDFIVTVVDVDLTHLMGKAEKINITVPALLLHRIDQFIATHPEYKNRSNFLSQLATNRLLSA.

It to E.coli ydcQ.

This is an uncharacterized protein from Haemophilus phage HP1 (strain HP1c1) (Bacteriophage HP1).